The primary structure comprises 111 residues: Colicin-Ia immunity protein (111 aa).

The next 2 helical transmembrane spans lie at 33–53 and 85–105; these read LLFWCISLCGMVLYPVAKWYI and TGTVFILSLPLSMIYILSVII.

The protein localises to the cell membrane. In terms of biological role, this protein is able to protect a cell, which harbors the plasmid ColIa-CA53 encoding colicin Ia, against colicin Ia. This chain is Colicin-Ia immunity protein, found in Escherichia coli.